The following is a 697-amino-acid chain: Glycine--tRNA ligase beta subunit (697 aa).

Belongs to the class-II aminoacyl-tRNA synthetase family. As to quaternary structure, tetramer of two alpha and two beta subunits.

The protein localises to the cytoplasm. The enzyme catalyses tRNA(Gly) + glycine + ATP = glycyl-tRNA(Gly) + AMP + diphosphate. This Cereibacter sphaeroides (strain ATCC 17023 / DSM 158 / JCM 6121 / CCUG 31486 / LMG 2827 / NBRC 12203 / NCIMB 8253 / ATH 2.4.1.) (Rhodobacter sphaeroides) protein is Glycine--tRNA ligase beta subunit.